The following is a 342-amino-acid chain: L-threonine 3-dehydrogenase (342 aa).

C38 is a binding site for Zn(2+). Catalysis depends on charge relay system residues T40 and H43. The Zn(2+) site is built by H63, E64, C93, C96, C99, and C107. Residues I175, D195, R200, 262-264, and 286-287 each bind NAD(+); these read LGI and IY.

This sequence belongs to the zinc-containing alcohol dehydrogenase family. In terms of assembly, homotetramer. It depends on Zn(2+) as a cofactor.

The protein localises to the cytoplasm. It catalyses the reaction L-threonine + NAD(+) = (2S)-2-amino-3-oxobutanoate + NADH + H(+). It functions in the pathway amino-acid degradation; L-threonine degradation via oxydo-reductase pathway; glycine from L-threonine: step 1/2. Functionally, catalyzes the NAD(+)-dependent oxidation of L-threonine to 2-amino-3-ketobutyrate. This Burkholderia vietnamiensis (strain G4 / LMG 22486) (Burkholderia cepacia (strain R1808)) protein is L-threonine 3-dehydrogenase.